The chain runs to 495 residues: Chromosomal replication initiator protein DnaA (495 aa).

Residues 1 to 91 form a domain I, interacts with DnaA modulators region; that stretch reads MTADPDPPFV…ITALSRHLGQ (91 aa). The domain II stretch occupies residues 91–154; sequence QRVELGVRIA…TPAAEDPNAV (64 aa). A domain III, AAA+ region region spans residues 155–371; it reads SLNRRYTFDT…GALIRVTAFA (217 aa). ATP contacts are provided by Gly-199, Gly-201, Lys-202, and Thr-203. Residues 372–495 form a domain IV, binds dsDNA region; that stretch reads SLNKTPIDKS…TTRIRQRAKR (124 aa).

The protein belongs to the DnaA family. In terms of assembly, oligomerizes as a right-handed, spiral filament on DNA at oriC.

The protein localises to the cytoplasm. Its function is as follows. Plays an essential role in the initiation and regulation of chromosomal replication. ATP-DnaA binds to the origin of replication (oriC) to initiate formation of the DNA replication initiation complex once per cell cycle. Binds the DnaA box (a 9 base pair repeat at the origin) and separates the double-stranded (ds)DNA. Forms a right-handed helical filament on oriC DNA; dsDNA binds to the exterior of the filament while single-stranded (ss)DNA is stabiized in the filament's interior. The ATP-DnaA-oriC complex binds and stabilizes one strand of the AT-rich DNA unwinding element (DUE), permitting loading of DNA polymerase. After initiation quickly degrades to an ADP-DnaA complex that is not apt for DNA replication. Binds acidic phospholipids. This Mycobacterium sp. (strain JLS) protein is Chromosomal replication initiator protein DnaA.